Here is a 295-residue protein sequence, read N- to C-terminus: Putative attaching and effacing protein homolog (295 aa).

A signal peptide spans 1 to 25; sequence MSHYKTGHKQPRFRYSVLARCVAWA.

This sequence belongs to the intimin/invasin family.

The protein is Putative attaching and effacing protein homolog (eaeH) of Escherichia coli (strain K12).